Here is an 804-residue protein sequence, read N- to C-terminus: Phenylalanine--tRNA ligase beta subunit (804 aa).

Residues Ala39–Tyr155 form the tRNA-binding domain. The B5 domain maps to Arg408 to Ser483. Mg(2+)-binding residues include Asp461, Asp467, Glu470, and Glu471. Positions Pro711–Arg804 constitute an FDX-ACB domain.

It belongs to the phenylalanyl-tRNA synthetase beta subunit family. Type 1 subfamily. Tetramer of two alpha and two beta subunits. Mg(2+) serves as cofactor.

The protein localises to the cytoplasm. The catalysed reaction is tRNA(Phe) + L-phenylalanine + ATP = L-phenylalanyl-tRNA(Phe) + AMP + diphosphate + H(+). The polypeptide is Phenylalanine--tRNA ligase beta subunit (Lactobacillus johnsonii (strain CNCM I-12250 / La1 / NCC 533)).